A 556-amino-acid polypeptide reads, in one-letter code: Formate--tetrahydrofolate ligase (556 aa).

Residue 65–72 (TPAGEGKS) coordinates ATP.

This sequence belongs to the formate--tetrahydrofolate ligase family.

It catalyses the reaction (6S)-5,6,7,8-tetrahydrofolate + formate + ATP = (6R)-10-formyltetrahydrofolate + ADP + phosphate. The protein operates within one-carbon metabolism; tetrahydrofolate interconversion. This chain is Formate--tetrahydrofolate ligase, found in Streptococcus pneumoniae serotype 4 (strain ATCC BAA-334 / TIGR4).